Reading from the N-terminus, the 156-residue chain is ATP synthase subunit b (156 aa).

Residues 7–29 (LIGQLIAFALFTWFCVKFVWPPI) traverse the membrane as a helical segment.

It belongs to the ATPase B chain family. In terms of assembly, F-type ATPases have 2 components, F(1) - the catalytic core - and F(0) - the membrane proton channel. F(1) has five subunits: alpha(3), beta(3), gamma(1), delta(1), epsilon(1). F(0) has three main subunits: a(1), b(2) and c(10-14). The alpha and beta chains form an alternating ring which encloses part of the gamma chain. F(1) is attached to F(0) by a central stalk formed by the gamma and epsilon chains, while a peripheral stalk is formed by the delta and b chains.

It is found in the cell inner membrane. Functionally, f(1)F(0) ATP synthase produces ATP from ADP in the presence of a proton or sodium gradient. F-type ATPases consist of two structural domains, F(1) containing the extramembraneous catalytic core and F(0) containing the membrane proton channel, linked together by a central stalk and a peripheral stalk. During catalysis, ATP synthesis in the catalytic domain of F(1) is coupled via a rotary mechanism of the central stalk subunits to proton translocation. Its function is as follows. Component of the F(0) channel, it forms part of the peripheral stalk, linking F(1) to F(0). This Actinobacillus succinogenes (strain ATCC 55618 / DSM 22257 / CCUG 43843 / 130Z) protein is ATP synthase subunit b.